A 284-amino-acid chain; its full sequence is Ubiquinone biosynthesis protein COQ4, mitochondrial (284 aa).

Residues H165, D166, H169, and E181 each coordinate Zn(2+).

It belongs to the COQ4 family. In terms of assembly, component of a multi-subunit COQ enzyme complex, composed of at least COQ3, COQ4, COQ5, COQ6, COQ7 and COQ9. The cofactor is Zn(2+).

The protein localises to the mitochondrion inner membrane. It catalyses the reaction a 4-hydroxy-3-methoxy-5-(all-trans-polyprenyl)benzoate + H(+) = a 2-methoxy-6-(all-trans-polyprenyl)phenol + CO2. It participates in cofactor biosynthesis; ubiquinone biosynthesis. Its function is as follows. Lyase that catalyzes the C1-decarboxylation of 4-hydroxy-3-methoxy-5-(all-trans-polyprenyl)benzoic acid into 2-methoxy-6-(all-trans-polyprenyl)phenol during ubiquinone biosynthesis. The sequence is that of Ubiquinone biosynthesis protein COQ4, mitochondrial from Blastomyces gilchristii (strain SLH14081) (Blastomyces dermatitidis).